A 273-amino-acid polypeptide reads, in one-letter code: SUMO-1 cysteine protease S273R (273 aa).

Active-site residues include H168 and N187. Q226 provides a ligand contact to substrate. C232 serves as the catalytic Nucleophile.

Belongs to the peptidase C63 family.

It localises to the host cytoplasm. Its subcellular location is the virion. Functionally, cysteine protease that plays several role during infection including processing of the structural polyprotein or inhibition of the host immune response. Catalyzes the maturation of the pp220 and pp62 polyprotein precursors into core-shell proteins. Plays a role in the disruption of host pyroptosis via specific cleavage of gasdermin D/GSDMD. In addition, strongly decreases the host cGAS-STING signaling by targeting IKBKE via its enzymatic activity. Also impairs host FOXJ1-mediated antiviral effect via degradation of FOXJ1. In Ornithodoros (relapsing fever ticks), this protein is SUMO-1 cysteine protease S273R.